Reading from the N-terminus, the 335-residue chain is Tetraacyldisaccharide 4'-kinase (335 aa).

Residue Asn62–Thr69 participates in ATP binding.

It belongs to the LpxK family.

It carries out the reaction a lipid A disaccharide + ATP = a lipid IVA + ADP + H(+). It functions in the pathway glycolipid biosynthesis; lipid IV(A) biosynthesis; lipid IV(A) from (3R)-3-hydroxytetradecanoyl-[acyl-carrier-protein] and UDP-N-acetyl-alpha-D-glucosamine: step 6/6. Functionally, transfers the gamma-phosphate of ATP to the 4'-position of a tetraacyldisaccharide 1-phosphate intermediate (termed DS-1-P) to form tetraacyldisaccharide 1,4'-bis-phosphate (lipid IVA). This is Tetraacyldisaccharide 4'-kinase from Methylobacillus flagellatus (strain ATCC 51484 / DSM 6875 / VKM B-1610 / KT).